Here is a 445-residue protein sequence, read N- to C-terminus: Phosphoglucosamine mutase (445 aa).

Serine 102 serves as the catalytic Phosphoserine intermediate. Positions 102, 241, 243, and 245 each coordinate Mg(2+). Position 102 is a phosphoserine (serine 102).

This sequence belongs to the phosphohexose mutase family. Requires Mg(2+) as cofactor. Activated by phosphorylation.

It catalyses the reaction alpha-D-glucosamine 1-phosphate = D-glucosamine 6-phosphate. Functionally, catalyzes the conversion of glucosamine-6-phosphate to glucosamine-1-phosphate. The protein is Phosphoglucosamine mutase of Serratia proteamaculans (strain 568).